The chain runs to 241 residues: Ribosomal RNA small subunit methyltransferase G (241 aa).

S-adenosyl-L-methionine contacts are provided by residues G79, F84, 130–131 (AE), and R150.

It belongs to the methyltransferase superfamily. RNA methyltransferase RsmG family.

Its subcellular location is the cytoplasm. In terms of biological role, specifically methylates the N7 position of a guanine in 16S rRNA. The chain is Ribosomal RNA small subunit methyltransferase G from Limosilactobacillus reuteri (strain DSM 20016) (Lactobacillus reuteri).